A 1394-amino-acid chain; its full sequence is DNA-directed RNA polymerase subunit beta' (1394 aa).

Zn(2+)-binding residues include cysteine 71, cysteine 73, cysteine 86, and cysteine 89. Residues aspartate 462, aspartate 464, and aspartate 466 each coordinate Mg(2+). Cysteine 810, cysteine 883, cysteine 890, and cysteine 893 together coordinate Zn(2+).

Belongs to the RNA polymerase beta' chain family. As to quaternary structure, the RNAP catalytic core consists of 2 alpha, 1 beta, 1 beta' and 1 omega subunit. When a sigma factor is associated with the core the holoenzyme is formed, which can initiate transcription. Mg(2+) is required as a cofactor. The cofactor is Zn(2+).

The catalysed reaction is RNA(n) + a ribonucleoside 5'-triphosphate = RNA(n+1) + diphosphate. Its function is as follows. DNA-dependent RNA polymerase catalyzes the transcription of DNA into RNA using the four ribonucleoside triphosphates as substrates. In Beijerinckia indica subsp. indica (strain ATCC 9039 / DSM 1715 / NCIMB 8712), this protein is DNA-directed RNA polymerase subunit beta'.